A 997-amino-acid polypeptide reads, in one-letter code: Signal peptide, CUB and EGF-like domain-containing protein 2 (997 aa).

Residues 1 to 28 form the signal peptide; it reads MGVAGCGRPREARALLLLLLLLPPLLAA. The EGF-like 1; calcium-binding domain occupies 43–83; that stretch reads DVDECAQGLDDCHADALCQNTPTSYKCSCKPGYQGEGRQCE. Intrachain disulfides connect Cys47/Cys60, Cys54/Cys69, Cys71/Cys82, Cys88/Cys100, Cys96/Cys109, Cys111/Cys124, Cys130/Cys141, and Cys137/Cys150. The EGF-like 2; calcium-binding domain maps to 84–125; sequence DMDECDNTLNGGCVHDCLNIPGNYRCTCFDGFMLAHDGHNCL. The EGF-like 3; calcium-binding domain maps to 126 to 162; that stretch reads DMDECLENNGGCQHICTNVIGSYECRCKEGFFLSDNQ. 3 consecutive EGF-like domains span residues 175–211, 215–250, and 284–319; these read CMNK…QKDC, CNHG…GRSC, and CAVN…GKTC. One can recognise an EGF-like 7; calcium-binding domain in the interval 321–361; the sequence is DIDECQTRNGGCNHFCKNTVGSFDCSCKKGFKLLTDEKSCQ. 9 disulfides stabilise this stretch: Cys325-Cys336, Cys332-Cys345, Cys347-Cys360, Cys366-Cys376, Cys372-Cys385, Cys387-Cys399, Cys405-Cys416, Cys412-Cys425, and Cys427-Cys440. The 39-residue stretch at 362-400 folds into the EGF-like 8; calcium-binding domain; the sequence is DVDECSLERTCDHSCINHPGTFICACNPGYTLYSFTHCG. Positions 401 to 441 constitute an EGF-like 9; calcium-binding domain; sequence DTNECSVNNGGCQQVCINTVGSYECQCHPGFKLHWNKKDCV. Residue Asn657 is glycosylated (N-linked (GlcNAc...) asparagine). Cys807 and Cys833 form a disulfide bridge. The CUB domain occupies 807-919; it reads CGGELGDFTG…RGFQVPYVTY (113 aa). The tract at residues 845 to 854 is interaction with the cholesterol-anchor of SHH; that stretch reads ILIVVPEIFL. A disulfide bridge connects residues Cys860 and Cys881.

As to quaternary structure, interacts with SHH via the cholesterol anchor of the dually lipid-modified SHH (ShhNp). Interacts with PTCH1. Forms homooligomers and heterooligomers with SCUBE1 and SCUBE3. Interacts with VEGFR2. In terms of processing, N-glycosylated. In terms of tissue distribution, expressed in adult heart, lung and testis.

Its subcellular location is the secreted. It is found in the cell surface. Its function is as follows. Lipid-binding protein required for SHH long-range signaling by binding to the dually lipid-modified SHH (ShhNp) and by promoting ShhNp mobilization, solubilization and release from the cell membrane. Acts by enhancing the proteolytic processing (shedding) of the lipid-modified N- and C- terminal of ShhNp at the cell surface. Synergizes with DISP1 to cause an increase in SHH secretion. Probable cell surface coreceptor for VEGFR2 involved in VEGFR2-mediated angiogenesis. The polypeptide is Signal peptide, CUB and EGF-like domain-containing protein 2 (Mus musculus (Mouse)).